Consider the following 88-residue polypeptide: Small ribosomal subunit protein bS16 (88 aa).

It belongs to the bacterial ribosomal protein bS16 family.

This chain is Small ribosomal subunit protein bS16, found in Anaeromyxobacter sp. (strain K).